We begin with the raw amino-acid sequence, 276 residues long: MQQHIVEEMKVKVSIDPVEEIKKRVDFIKGKLLEAHCKSLILGISGGVDSTTCGRLAQLAVNELNLETQSSDYQFIAVRLPYGIQQDEDEAQLALQFIQPTHSISINIKDGVDGLHSANHIALQDTGLLPTDSAKIDFVKGNVKARARMIAQYEVAGYVGGLVLGTDHSAENITGFYTKFGDGACDLAPLFGLNKRQVREVAAQLGAPEQLVKKVPTADLEELAPQKADEDALSVSYDQIDDFLEGKKIDADAEARLIKIYQMSQHKRKPIPTIYD.

ATP is bound at residue 43 to 50 (GISGGVDS). A Mg(2+)-binding site is contributed by Asp49. Residue Arg146 coordinates deamido-NAD(+). Thr166 lines the ATP pocket. Mg(2+) is bound at residue Glu171. The deamido-NAD(+) site is built by Lys179 and Asp186. Positions 195 and 217 each coordinate ATP. A deamido-NAD(+)-binding site is contributed by 266-267 (HK).

The protein belongs to the NAD synthetase family. Homodimer.

It catalyses the reaction deamido-NAD(+) + NH4(+) + ATP = AMP + diphosphate + NAD(+) + H(+). The protein operates within cofactor biosynthesis; NAD(+) biosynthesis; NAD(+) from deamido-NAD(+) (ammonia route): step 1/1. In terms of biological role, catalyzes the ATP-dependent amidation of deamido-NAD to form NAD. Uses ammonia as a nitrogen source. This chain is NH(3)-dependent NAD(+) synthetase, found in Aliivibrio fischeri (strain MJ11) (Vibrio fischeri).